The chain runs to 441 residues: uncharacterized protein (441 aa).

ATP is bound at residue Gly-217–Thr-224.

This sequence belongs to the GSP E family.

This is an uncharacterized protein from Bacillus anthracis.